Consider the following 165-residue polypeptide: Putative pre-16S rRNA nuclease (165 aa).

This sequence belongs to the YqgF nuclease family.

The protein resides in the cytoplasm. Functionally, could be a nuclease involved in processing of the 5'-end of pre-16S rRNA. The polypeptide is Putative pre-16S rRNA nuclease (Sinorhizobium medicae (strain WSM419) (Ensifer medicae)).